Consider the following 66-residue polypeptide: Large ribosomal subunit protein uL29 (66 aa).

It belongs to the universal ribosomal protein uL29 family.

The protein is Large ribosomal subunit protein uL29 of Bartonella quintana (strain Toulouse) (Rochalimaea quintana).